We begin with the raw amino-acid sequence, 78 residues long: Large ribosomal subunit protein bL28 (78 aa).

The tract at residues 1-20 (MSRVCQVTGKGPVTGNNISH) is disordered.

It belongs to the bacterial ribosomal protein bL28 family.

This Azotobacter vinelandii (strain DJ / ATCC BAA-1303) protein is Large ribosomal subunit protein bL28.